Consider the following 317-residue polypeptide: Acetyl-coenzyme A carboxylase carboxyl transferase subunit alpha (317 aa).

In terms of domain architecture, CoA carboxyltransferase C-terminal spans 40–293 (LEVRVREAIV…GDVIANALGE (254 aa)).

It belongs to the AccA family. In terms of assembly, acetyl-CoA carboxylase is a heterohexamer composed of biotin carboxyl carrier protein (AccB), biotin carboxylase (AccC) and two subunits each of ACCase subunit alpha (AccA) and ACCase subunit beta (AccD).

Its subcellular location is the cytoplasm. The enzyme catalyses N(6)-carboxybiotinyl-L-lysyl-[protein] + acetyl-CoA = N(6)-biotinyl-L-lysyl-[protein] + malonyl-CoA. Its pathway is lipid metabolism; malonyl-CoA biosynthesis; malonyl-CoA from acetyl-CoA: step 1/1. Its function is as follows. Component of the acetyl coenzyme A carboxylase (ACC) complex. First, biotin carboxylase catalyzes the carboxylation of biotin on its carrier protein (BCCP) and then the CO(2) group is transferred by the carboxyltransferase to acetyl-CoA to form malonyl-CoA. This is Acetyl-coenzyme A carboxylase carboxyl transferase subunit alpha from Rhizobium leguminosarum bv. trifolii (strain WSM2304).